The sequence spans 321 residues: Cytochrome c biogenesis protein CcsA (321 aa).

Helical transmembrane passes span 17–37 (VVSIVITIHLITLLVDEIIGL), 46–63 (MTTFFCITGLLMTRWIYL), 71–91 (LYESLIFLSWSFSIIHMVPYF), 98–118 (LKAITAPSAIFTQGFATSGLL), 143–163 (MVLGYAALLCGSLLSLALLVI), 225–245 (IISLGFIFLTIGILSGAVWAN), 259–273 (TWAFITWTLFSIYLH), and 286–306 (AIVASMGFLIIWICYFGVNLL).

Belongs to the CcmF/CycK/Ccl1/NrfE/CcsA family. As to quaternary structure, may interact with Ccs1.

It localises to the plastid. The protein resides in the chloroplast thylakoid membrane. In terms of biological role, required during biogenesis of c-type cytochromes (cytochrome c6 and cytochrome f) at the step of heme attachment. The protein is Cytochrome c biogenesis protein CcsA of Morus indica (Mulberry).